A 564-amino-acid chain; its full sequence is MPKVEIYKSILLEKIGKNLTNYELESIIETAKAEICEIDIVNDKIKIEFNDTNRPDLWSSAGLARHIKTYLSGNVPSFDFFSMTDNLQKFYGEIFVSPEVFGIRPFIFGFLAKGMICDERMLEILIQLQEKLSHNYGQKRKRVAMGMYSSNLINFPINYVTCSSDYKFVPLGMDIEMSIKEINEKHPKGIEYSPIFENVDQYSLLLDYKNNVLSYPPIINSRDIGTLKVGDTNLFIEVTGTDLEATLLSLSIVACDLYDMGFKILPVKTVFPKETLFGKEIICPYYFQNSLKINVDSVNKLLGSNFTANDMCLDLKKLGISAYFEESDTFYIMPPVYRNDFLHEVDVIEEVMIGKGLDNFKSELPKDFTIGKLSPIEEFSRSVRNLMIGMGFQEMIYNYLGSKVDFIEKMNIKGSELLSVSNPMTESYEYIRGSIISDLLKSESISSNFPYPHKIFEIGKVALKDLVSDEGTVTYDNLAFLMADKEFSFNEINSLVSSLFYYLNIGFKVKESSKNLYIDGRGADILVNDIVLGSFGEVSPYILSNFGIMVPCCVLEININGLLH.

One can recognise a B5 domain in the interval Tyr286 to Ser362. The Mg(2+) site is built by Asp340, Asp346, Glu349, and Glu350.

It belongs to the phenylalanyl-tRNA synthetase beta subunit family. Type 2 subfamily. In terms of assembly, tetramer of two alpha and two beta subunits. Mg(2+) is required as a cofactor.

It localises to the cytoplasm. The enzyme catalyses tRNA(Phe) + L-phenylalanine + ATP = L-phenylalanyl-tRNA(Phe) + AMP + diphosphate + H(+). The sequence is that of Phenylalanine--tRNA ligase beta subunit from Borrelia duttonii (strain Ly).